The primary structure comprises 1512 residues: ATP-dependent permease YOR1 (1512 aa).

The interval 1–68 (MSPLLPTHWG…KGMKETEDGG (68 aa)) is disordered. A compositionally biased stretch (polar residues) spans 13–29 (APQNEPTLPSPSHSVST). A compositionally biased stretch (basic and acidic residues) spans 31-65 (VGDEEKLRRSEGSDGEDRINLDSNKYDVKGMKETE). Helical transmembrane passes span 229 to 249 (ASLAMSLLDVFGWFFMSAGFI), 288 to 308 (GPGIGAAIGLLLLLICSSLGM), 363 to 385 (FAAGFSHMLWTAPVQMIVIIIIL), 475 to 495 (GMTAIAMSLPILAAILSFITY), and 507 to 527 (IFTVITLFNLMRMPLMMWPMT). The 288-residue stretch at 246 to 533 (AGFIKVFGDT…WPMTLSSTAD (288 aa)) folds into the ABC transmembrane type-1 1 domain. Positions 594–656 (VLNGGKPGGP…SAPGIDEEIS (63 aa)) are disordered. A compositionally biased stretch (low complexity) spans 619-643 (AEEIQAETAAGQPGAGEASAEGQGQ). One can recognise an ABC transporter 1 domain in the interval 651–871 (IDEEISEKKE…NGAFAKLIKE (221 aa)). 683-690 (GAIGSGKS) is an ATP binding site. 4 helical membrane-spanning segments follow: residues 937-957 (GVFMLPLLFFCIVVAQSFYVI), 974-994 (NGFYMGIYAGLGVGLAIALFF), 1067-1087 (VILLAIIEPYFLIAMAVVSLL), and 1167-1187 (FLGSLLSFSVAIIVVCSSSVS). The ABC transmembrane type-1 2 domain maps to 943 to 1217 (LLFFCIVVAQ…LVRQIAEVEN (275 aa)). An ABC transporter 2 domain is found at 1255-1496 (IEFKDVRMRY…GGIFTEMCSK (242 aa)). 1289-1296 (GRTGAGKS) contacts ATP.

Belongs to the ABC transporter superfamily. ABCC family. Conjugate transporter (TC 3.A.1.208) subfamily.

Its subcellular location is the extracellular vesicle membrane. The protein resides in the secreted. In terms of biological role, transmembrane transporter. May play a role in the packaging or formation of extracellular vesicles (EVs), and in the export of virulence factors from EVs. Required for efficient non-lytic exocytosis from host macrophages, the process by which the yeast escapes host macrophages with both host cell and pathogen remaining viable. The polypeptide is ATP-dependent permease YOR1 (Cryptococcus neoformans var. grubii serotype A (strain H99 / ATCC 208821 / CBS 10515 / FGSC 9487) (Filobasidiella neoformans var. grubii)).